A 311-amino-acid chain; its full sequence is Acetaldehyde dehydrogenase (311 aa).

The active-site Acyl-thioester intermediate is cysteine 131. NAD(+) contacts are provided by residues 162–170 and asparagine 273; that span reads SVGPGTRKN.

It belongs to the acetaldehyde dehydrogenase family.

It catalyses the reaction acetaldehyde + NAD(+) + CoA = acetyl-CoA + NADH + H(+). In Ralstonia pickettii (strain 12J), this protein is Acetaldehyde dehydrogenase.